The primary structure comprises 860 residues: Protein argonaute-2 (860 aa).

Tyr2 is modified (3'-nitrotyrosine). The 120-residue stretch at 230-349 (PVIEFVCEVL…LPLEVCNIVA (120 aa)) folds into the PAZ domain. The segment at 312-317 (YFKDRH) is interaction with guide RNA. A Phosphoserine modification is found at Ser388. Positions 518–819 (LVVVILPGKT…VAFRARYHLV (302 aa)) constitute a Piwi domain. The segment at 525–567 (GKTPVYAEVKRVGDTVLGMATQCVQMKNVQRTTPQTLSNLCLK) is interaction with guide RNA. Residues 588–591 (FQQP) form an interaction with GW182 family members region. Asp598 contributes to the a divalent metal cation binding site. The tract at residues 651-661 (LIQFYKSTRFK) is interaction with GW182 family members. Position 670 (Asp670) interacts with a divalent metal cation. A 4-hydroxyproline modification is found at Pro701. 3 interaction with guide RNA regions span residues 710 to 711 (KR), 754 to 762 (HAGIQGTSR), and 791 to 813 (YVRC…VAFR). His808 lines the a divalent metal cation pocket. Phosphoserine is present on residues Ser825, Ser829, Ser832, and Ser835.

Belongs to the argonaute family. Ago subfamily. Interacts with DICER1 through its Piwi domain and with TARBP2 during assembly of the RNA-induced silencing complex (RISC). Together, DICER1, AGO2 and TARBP2 constitute the trimeric RISC loading complex (RLC), or micro-RNA (miRNA) loading complex (miRLC). Within the RLC/miRLC, DICER1 and TARBP2 are required to process precursor miRNAs (pre-miRNAs) to mature miRNAs and then load them onto AGO2. AGO2 bound to the mature miRNA constitutes the minimal RISC and may subsequently dissociate from DICER1 and TARBP2. Note however that the term RISC has also been used to describe the trimeric RLC/miRLC. The formation of RISC complexes containing siRNAs rather than miRNAs appears to occur independently of DICER1. Interacts with AGO1. Also interacts with DDB1, DDX5, DDX6, DDX20, DHX30, DHX36, DDX47, DHX9, ELAVL, FXR1, GEMIN4, HNRNPF, IGF2BP1, ILF3, IMP8, MATR3, PABPC1, PRMT5, P4HA1, P4HB, RBM4, SART3, TNRC6A, TNRC6B, UPF1 and YBX1. Interacts with the P-body components DCP1A and XRN1. Associates with polysomes and messenger ribonucleoproteins (mNRPs). Interacts with RBM4; the interaction is modulated under stress-induced conditions, occurs under both cell proliferation and differentiation conditions and in an RNA- and phosphorylation-independent manner. Interacts with LIMD1, WTIP and AJUBA. Interacts with TRIM71; the interaction increases in presence of RNA. Interacts with APOBEC3G in an RNA-dependent manner. Interacts with APOBEC3A, APOBEC3C, APOBEC3F and APOBEC3H. Interacts with DICER1, TARBP2, EIF6, MOV10 and RPL7A (60S ribosome subunit); they form a large RNA-induced silencing complex (RISC). Interacts with FMR1. Interacts with ZFP36. Interacts with RC3H1; the interaction is RNA independent. Found in a complex, composed of AGO2, CHD7 and ARB2A. Interacts with SND1 and SYT11. Interacts with CLNK. Interacts with GARRE1. Interacts with GRB2; this interaction is important for the formation of a ternary complex containing GRB2, AGO2 and DICER1. It depends on Mg(2+) as a cofactor. Requires Mn(2+) as cofactor. Post-translationally, hydroxylated. 4-hydroxylation appears to enhance protein stability but is not required for miRNA-binding or endonuclease activity. In terms of processing, ubiquitinated on surface-exposed lysines by a SCF-like E3 ubiquitin-protein ligase complex containing ZSWIM8 during target-directed microRNA degradation (TDMD), a process that mediates degradation of microRNAs (miRNAs). Ubiquitination by the SCF-like E3 ubiquitin-protein ligase complex containing ZSWIM8 leads to its subsequent degradation, thereby exposing miRNAs for degradation. ZSWIM8 recognizes and binds AGO2 when it is engaged with a TDMD target. Phosphorylation at Ser-388 by AKT3; leads to up-regulate translational repression of microRNA target and down-regulate endonucleolytic cleavage. Post-translationally, a phosphorylation cycle of C-terminal serine cluster (Ser-825-Ser-835) regulates the release of target mRNAs. Target-binding leads to phosphorylation of these residues by CSNK1A1, which reduces the affinity of AGO2 for mRNA and enables target release. The ANKRD52-PPP6C phosphatase complex dephosphorylates the residues, which primes AGO2 for binding a new target.

It is found in the cytoplasm. Its subcellular location is the P-body. The protein localises to the nucleus. The enzyme catalyses Endonucleolytic cleavage to 5'-phosphomonoester.. Required for RNA-mediated gene silencing (RNAi) by the RNA-induced silencing complex (RISC). The 'minimal RISC' appears to include AGO2 bound to a short guide RNA such as a microRNA (miRNA) or short interfering RNA (siRNA). These guide RNAs direct RISC to complementary mRNAs that are targets for RISC-mediated gene silencing. The precise mechanism of gene silencing depends on the degree of complementarity between the miRNA or siRNA and its target. Binding of RISC to a perfectly complementary mRNA generally results in silencing due to endonucleolytic cleavage of the mRNA specifically by AGO2. Binding of RISC to a partially complementary mRNA results in silencing through inhibition of translation, and this is independent of endonuclease activity. May inhibit translation initiation by binding to the 7-methylguanosine cap, thereby preventing the recruitment of the translation initiation factor eIF4-E. May also inhibit translation initiation via interaction with EIF6, which itself binds to the 60S ribosomal subunit and prevents its association with the 40S ribosomal subunit. The inhibition of translational initiation leads to the accumulation of the affected mRNA in cytoplasmic processing bodies (P-bodies), where mRNA degradation may subsequently occur. In some cases RISC-mediated translational repression is also observed for miRNAs that perfectly match the 3' untranslated region (3'-UTR). Can also up-regulate the translation of specific mRNAs under certain growth conditions. Binds to the AU element of the 3'-UTR of the TNF (TNF-alpha) mRNA and up-regulates translation under conditions of serum starvation. Also required for transcriptional gene silencing (TGS), in which short RNAs known as antigene RNAs or agRNAs direct the transcriptional repression of complementary promoter regions. The chain is Protein argonaute-2 (Ago2) from Rattus norvegicus (Rat).